A 331-amino-acid chain; its full sequence is CRISPR-associated endonuclease Cas1 (331 aa).

3 residues coordinate Mn(2+): Glu166, His228, and Asp243.

The protein belongs to the CRISPR-associated endonuclease Cas1 family. As to quaternary structure, homodimer, forms a heterotetramer with a Cas2 homodimer. Mg(2+) is required as a cofactor. It depends on Mn(2+) as a cofactor.

In terms of biological role, CRISPR (clustered regularly interspaced short palindromic repeat), is an adaptive immune system that provides protection against mobile genetic elements (viruses, transposable elements and conjugative plasmids). CRISPR clusters contain spacers, sequences complementary to antecedent mobile elements, and target invading nucleic acids. CRISPR clusters are transcribed and processed into CRISPR RNA (crRNA). Acts as a dsDNA endonuclease. Involved in the integration of spacer DNA into the CRISPR cassette. The polypeptide is CRISPR-associated endonuclease Cas1 (Hyperthermus butylicus (strain DSM 5456 / JCM 9403 / PLM1-5)).